The following is a 305-amino-acid chain: UDP-3-O-acyl-N-acetylglucosamine deacetylase (305 aa).

Residues histidine 79, histidine 238, and aspartate 242 each coordinate Zn(2+). The Proton donor role is filled by histidine 265.

This sequence belongs to the LpxC family. Requires Zn(2+) as cofactor.

It catalyses the reaction a UDP-3-O-[(3R)-3-hydroxyacyl]-N-acetyl-alpha-D-glucosamine + H2O = a UDP-3-O-[(3R)-3-hydroxyacyl]-alpha-D-glucosamine + acetate. The protein operates within glycolipid biosynthesis; lipid IV(A) biosynthesis; lipid IV(A) from (3R)-3-hydroxytetradecanoyl-[acyl-carrier-protein] and UDP-N-acetyl-alpha-D-glucosamine: step 2/6. In terms of biological role, catalyzes the hydrolysis of UDP-3-O-myristoyl-N-acetylglucosamine to form UDP-3-O-myristoylglucosamine and acetate, the committed step in lipid A biosynthesis. The sequence is that of UDP-3-O-acyl-N-acetylglucosamine deacetylase from Salmonella typhi.